Reading from the N-terminus, the 178-residue chain is ATP synthase subunit delta (178 aa).

Belongs to the ATPase delta chain family. In terms of assembly, F-type ATPases have 2 components, F(1) - the catalytic core - and F(0) - the membrane proton channel. F(1) has five subunits: alpha(3), beta(3), gamma(1), delta(1), epsilon(1). F(0) has three main subunits: a(1), b(2) and c(10-14). The alpha and beta chains form an alternating ring which encloses part of the gamma chain. F(1) is attached to F(0) by a central stalk formed by the gamma and epsilon chains, while a peripheral stalk is formed by the delta and b chains.

The protein resides in the cell membrane. Its function is as follows. F(1)F(0) ATP synthase produces ATP from ADP in the presence of a proton or sodium gradient. F-type ATPases consist of two structural domains, F(1) containing the extramembraneous catalytic core and F(0) containing the membrane proton channel, linked together by a central stalk and a peripheral stalk. During catalysis, ATP synthesis in the catalytic domain of F(1) is coupled via a rotary mechanism of the central stalk subunits to proton translocation. In terms of biological role, this protein is part of the stalk that links CF(0) to CF(1). It either transmits conformational changes from CF(0) to CF(1) or is implicated in proton conduction. The sequence is that of ATP synthase subunit delta from Streptococcus pneumoniae (strain CGSP14).